The sequence spans 101 residues: MTRVSIDRNLLDRPYQTNLTYMVHHQSSQSPHSYRTLLEHSRLEIDSLYRRLEGTFSQQHHHRQQHTLAFAFCGRANTFISCFISFASLIRLLTYLLRKIE.

The chain crosses the membrane as a helical span at residues 68–90 (LAFAFCGRANTFISCFISFASLI).

Its subcellular location is the membrane. This is an uncharacterized protein from Saccharomyces cerevisiae (strain ATCC 204508 / S288c) (Baker's yeast).